The primary structure comprises 426 residues: Putative FBD-associated F-box protein At5g53635 (426 aa).

Positions 1-45 (MISQLPDPLICHILSHLPIKDLVTTRVLSTRWRSLWLWLPCLELN) constitute an F-box domain. The region spanning 353–405 (MIQFGSSLVPECLLSSLEFVDIRIPFRGHLEVMKLVRYFLENSAILKKLSLDH) is the FBD domain.

This chain is Putative FBD-associated F-box protein At5g53635, found in Arabidopsis thaliana (Mouse-ear cress).